The sequence spans 1786 residues: Transcription initiation factor TFIID subunit 1b (1786 aa).

Disordered regions lie at residues 54–83 (EDYD…PVVL) and 350–372 (FGSR…PQLL). A compositionally biased stretch (basic and acidic residues) spans 61–83 (GQEKEHVPVEKSFDSEEREPVVL). Polar residues predominate over residues 352–362 (SRGSQSTNEST). Residues 574–650 (MTIVVKSLGG…VHLLRTKVHL (77 aa)) enclose the Ubiquitin-like domain. Over residues 1303 to 1313 (MKTNKHCPKYR) the composition is skewed to basic residues. 3 disordered regions span residues 1303–1382 (MKTN…DVAA), 1397–1471 (LKIS…KDQA), and 1596–1634 (SERE…ESGQ). The span at 1357-1377 (TKISVNEATKVGDSTSKTPGS) shows a compositional bias: polar residues. A compositionally biased stretch (basic residues) spans 1397-1407 (LKISSKAKPKA). The segment covering 1433-1464 (HNPSVSGQLLPSTETDQAASSRYTTSVPQPSL) has biased composition (polar residues). Coiled-coil stretches lie at residues 1591 to 1620 (REVI…LENY) and 1752 to 1786 (LADE…DSLR). A compositionally biased stretch (basic residues) spans 1604 to 1613 (RKAKQKKKLQ). Residues 1656–1774 (KRRKKGQVGL…DEYRDELKEA (119 aa)) enclose the Bromo domain.

The protein belongs to the TAF1 family. In terms of assembly, component of the TFIID complex. TFIID is composed of TATA binding protein (TBP) and a number of TBP-associated factors (TAFs) whose MWs range from 14-217 kDa. In terms of tissue distribution, expressed in roots, shoots, leaves and inflorescences.

Its subcellular location is the nucleus. Functionally, TAFs are components of the transcription factor IID (TFIID) complex that is essential for mediating regulation of RNA polymerase transcription. Core scaffold of the TFIID complex. Acts as a histone acetyltransferase involved in the light regulation of growth and gene expression. Required for H3K9, H3K27, and H4K12 acetylation on the target promoters. This chain is Transcription initiation factor TFIID subunit 1b (TAF1B), found in Arabidopsis thaliana (Mouse-ear cress).